Consider the following 155-residue polypeptide: Deoxyuridine 5'-triphosphate nucleotidohydrolase (155 aa).

Residues 74 to 76 (RSG), Asn87, and 91 to 93 (LID) each bind substrate.

It belongs to the dUTPase family. The cofactor is Mg(2+).

The catalysed reaction is dUTP + H2O = dUMP + diphosphate + H(+). Its pathway is pyrimidine metabolism; dUMP biosynthesis; dUMP from dCTP (dUTP route): step 2/2. In terms of biological role, this enzyme is involved in nucleotide metabolism: it produces dUMP, the immediate precursor of thymidine nucleotides and it decreases the intracellular concentration of dUTP so that uracil cannot be incorporated into DNA. The protein is Deoxyuridine 5'-triphosphate nucleotidohydrolase of Xanthomonas oryzae pv. oryzae (strain PXO99A).